The following is a 179-amino-acid chain: Pectinesterase inhibitor 5 (179 aa).

The N-terminal stretch at 1-25 (MATMLINHMLFLTSLLIVVFPVANA) is a signal peptide. 2 disulfide bridges follow: C35-C44 and C101-C141.

This sequence belongs to the PMEI family. In terms of tissue distribution, expressed in seeds, buds, and mature flowers.

The protein resides in the secreted. Its subcellular location is the extracellular space. It localises to the apoplast. Its function is as follows. Pectin methylesterase (PME) inhibitor that targets PME from seeds and modulates PME activity and pectin methylesterification during seed germination. This is Pectinesterase inhibitor 5 from Arabidopsis thaliana (Mouse-ear cress).